We begin with the raw amino-acid sequence, 181 residues long: U1 small nuclear ribonucleoprotein C (181 aa).

The segment at 2–34 (PKCDYCDVYLTHDSMSVRKAHNSGRNHLRNVVD) adopts a Matrin-type zinc-finger fold. 2 stretches are compositionally biased toward pro residues: residues 129–143 (PGMP…PGGL) and 150–174 (PIPP…PPPG). Residues 129 to 181 (PGMPAGMPFPPPGGLPPNFQFPIPPPGGFPGMPPPGQGFPGMPPPGGNHDERR) are disordered.

It belongs to the U1 small nuclear ribonucleoprotein C family. U1 snRNP is composed of the 7 core Sm proteins B/B', D1, D2, D3, E, F and G that assemble in a heptameric protein ring on the Sm site of the small nuclear RNA to form the core snRNP, and at least 3 U1 snRNP-specific proteins U1-70K, U1-A and U1-C. U1-C interacts with U1 snRNA and the 5' splice-site region of the pre-mRNA.

It localises to the nucleus. Its function is as follows. Component of the spliceosomal U1 snRNP, which is essential for recognition of the pre-mRNA 5' splice-site and the subsequent assembly of the spliceosome. U1-C is directly involved in initial 5' splice-site recognition for both constitutive and regulated alternative splicing. The interaction with the 5' splice-site seems to precede base-pairing between the pre-mRNA and the U1 snRNA. Stimulates commitment or early (E) complex formation by stabilizing the base pairing of the 5' end of the U1 snRNA and the 5' splice-site region. In Sclerotinia sclerotiorum (strain ATCC 18683 / 1980 / Ss-1) (White mold), this protein is U1 small nuclear ribonucleoprotein C.